The sequence spans 198 residues: FMN-dependent NADH:quinone oxidoreductase (198 aa).

Residues Ser-10, 16-18, 94-97, and 138-141 contribute to the FMN site; these read SQS, MYNF, and TRGG.

It belongs to the azoreductase type 1 family. Homodimer. FMN serves as cofactor.

It catalyses the reaction 2 a quinone + NADH + H(+) = 2 a 1,4-benzosemiquinone + NAD(+). It carries out the reaction N,N-dimethyl-1,4-phenylenediamine + anthranilate + 2 NAD(+) = 2-(4-dimethylaminophenyl)diazenylbenzoate + 2 NADH + 2 H(+). Quinone reductase that provides resistance to thiol-specific stress caused by electrophilic quinones. Its function is as follows. Also exhibits azoreductase activity. Catalyzes the reductive cleavage of the azo bond in aromatic azo compounds to the corresponding amines. This Shewanella sp. (strain ANA-3) protein is FMN-dependent NADH:quinone oxidoreductase.